The primary structure comprises 154 residues: Myoglobin (154 aa).

Residues G2–K148 form the Globin domain. At S4 the chain carries Phosphoserine. H65 contributes to the nitrite binding site. Position 65 (H65) interacts with O2. A Phosphothreonine modification is found at T68. H94 contributes to the heme b binding site.

This sequence belongs to the globin family. In terms of assembly, monomeric.

It is found in the cytoplasm. It localises to the sarcoplasm. The enzyme catalyses Fe(III)-heme b-[protein] + nitric oxide + H2O = Fe(II)-heme b-[protein] + nitrite + 2 H(+). The catalysed reaction is H2O2 + AH2 = A + 2 H2O. Functionally, monomeric heme protein which primary function is to store oxygen and facilitate its diffusion within muscle tissues. Reversibly binds oxygen through a pentacoordinated heme iron and enables its timely and efficient release as needed during periods of heightened demand. Depending on the oxidative conditions of tissues and cells, and in addition to its ability to bind oxygen, it also has a nitrite reductase activity whereby it regulates the production of bioactive nitric oxide. Under stress conditions, like hypoxia and anoxia, it also protects cells against reactive oxygen species thanks to its pseudoperoxidase activity. The sequence is that of Myoglobin (MB) from Ziphius cavirostris (Cuvier's beaked whale).